Here is an 803-residue protein sequence, read N- to C-terminus: Nuclear factor of activated T-cells, cytoplasmic 1 (803 aa).

Residues 101 to 106 (PRIEIT) are calcineurin-binding. The segment at 109 to 199 (LGLHHNSSQF…CVSPKTTDPE (91 aa)) is transactivation domain A (TAD-A). Polar residues predominate over residues 181 to 195 (PQTSPWQSPCVSPKT). Positions 181 to 279 (PQTSPWQSPC…GSPRVSVTDD (99 aa)) are disordered. 2 repeat units span residues 184–200 (SPWQ…DPEE) and 214–230 (SPRH…VTEE). A 3 X SP repeats region spans residues 184-279 (SPWQSPCVSP…GSPRVSVTDD (96 aa)). Residues Ser-214 and Ser-218 each carry the phosphoserine modification. The segment covering 214 to 231 (SPRHSPSTSPRTSVTEES) has biased composition (low complexity). At Ser-226 the chain carries Phosphoserine; by PKA. Positions 246-248 (KRK) match the Nuclear localization signal motif. Repeat 3 spans residues 263–279 (SPTPSPQGSPRVSVTDD). Ser-275 carries the phosphoserine; by PKA modification. The Nuclear export signal signature appears at 291 to 302 (SAIVAAINALST). Residues 389 to 571 (PSLPALDWQL…NPIECSQRSA (183 aa)) enclose the RHD domain. The DNA-binding element occupies 418–425 (RAHYETEG). A Nuclear localization signal motif is present at residues 661–663 (KRK). A disordered region spans residues 723 to 803 (LMPGFPPRPQ…QPQVSPTSSG (81 aa)). The span at 778–792 (SGVPPGPPQPPPPTL) shows a compositional bias: pro residues. Residues 793–803 (LQPQVSPTSSG) are compositionally biased toward low complexity.

As to quaternary structure, member of the multicomponent NFATC transcription complex that consists of at least two components, a pre-existing cytoplasmic component NFATC2 and an inducible nuclear component NFATC1. Other members such as NFATC4, NFATC3 or members of the activating protein-1 family, MAF, GATA4 and Cbp/p300 can also bind the complex. NFATC proteins bind to DNA as monomers. Interacts with HOMER2 and HOMER3; this interaction may compete with calcineurin/PPP3CA-binding and hence prevent NFATC1 dephosphorylation and activation. Interacts with TLE6/GRG6. Post-translationally, phosphorylated by NFATC-kinase and GSK3B; phosphorylation induces NFATC1 nuclear exit and dephosphorylation by calcineurin promotes nuclear import. Phosphorylation by PKA and DYRK2 negatively modulates nuclear accumulation, and promotes subsequent phosphorylation by GSK3B or casein kinase 1.

It is found in the cytoplasm. The protein resides in the nucleus. Plays a role in the inducible expression of cytokine genes in T-cells, especially in the induction of the IL-2 or IL-4 gene transcription. Also controls gene expression in embryonic cardiac cells. Could regulate not only the activation and proliferation but also the differentiation and programmed death of T-lymphocytes as well as lymphoid and non-lymphoid cells. Required for osteoclastogenesis and regulates many genes important for osteoclast differentiation and function. The chain is Nuclear factor of activated T-cells, cytoplasmic 1 from Bos taurus (Bovine).